Reading from the N-terminus, the 273-residue chain is Orotidine 5'-phosphate decarboxylase (273 aa).

Lys-95 (proton donor) is an active-site residue.

It belongs to the OMP decarboxylase family. Type 2 subfamily.

The enzyme catalyses orotidine 5'-phosphate + H(+) = UMP + CO2. It participates in pyrimidine metabolism; UMP biosynthesis via de novo pathway; UMP from orotate: step 2/2. This chain is Orotidine 5'-phosphate decarboxylase, found in Bordetella bronchiseptica (strain ATCC BAA-588 / NCTC 13252 / RB50) (Alcaligenes bronchisepticus).